The sequence spans 179 residues: Protein GrpE (179 aa).

Over residues 1-10 the composition is skewed to basic and acidic residues; sequence MSKKEEKQEE. Residues 1 to 23 are disordered; the sequence is MSKKEEKQEELQEEMEAVDAAGV.

This sequence belongs to the GrpE family. As to quaternary structure, homodimer.

The protein resides in the cytoplasm. Functionally, participates actively in the response to hyperosmotic and heat shock by preventing the aggregation of stress-denatured proteins, in association with DnaK and GrpE. It is the nucleotide exchange factor for DnaK and may function as a thermosensor. Unfolded proteins bind initially to DnaJ; upon interaction with the DnaJ-bound protein, DnaK hydrolyzes its bound ATP, resulting in the formation of a stable complex. GrpE releases ADP from DnaK; ATP binding to DnaK triggers the release of the substrate protein, thus completing the reaction cycle. Several rounds of ATP-dependent interactions between DnaJ, DnaK and GrpE are required for fully efficient folding. The sequence is that of Protein GrpE from Enterococcus faecalis (strain ATCC 700802 / V583).